We begin with the raw amino-acid sequence, 63 residues long: Cytochrome c oxidase subunit 5A, mitochondrial (63 aa).

It belongs to the cytochrome c oxidase subunit 5A family. In terms of assembly, component of the cytochrome c oxidase (complex IV, CIV), a multisubunit enzyme composed of a catalytic core of 3 subunits and several supernumerary subunits. The complex exists as a monomer or a dimer and forms supercomplexes (SCs) in the inner mitochondrial membrane with ubiquinol-cytochrome c oxidoreductase (cytochrome b-c1 complex, complex III, CIII).

Its subcellular location is the mitochondrion inner membrane. Its pathway is energy metabolism; oxidative phosphorylation. In terms of biological role, component of the cytochrome c oxidase, the last enzyme in the mitochondrial electron transport chain which drives oxidative phosphorylation. The respiratory chain contains 3 multisubunit complexes succinate dehydrogenase (complex II, CII), ubiquinol-cytochrome c oxidoreductase (cytochrome b-c1 complex, complex III, CIII) and cytochrome c oxidase (complex IV, CIV), that cooperate to transfer electrons derived from NADH and succinate to molecular oxygen, creating an electrochemical gradient over the inner membrane that drives transmembrane transport and the ATP synthase. Cytochrome c oxidase is the component of the respiratory chain that catalyzes the reduction of oxygen to water. Electrons originating from reduced cytochrome c in the intermembrane space (IMS) are transferred via the dinuclear copper A center (CU(A)) of subunit 2 and heme A of subunit 1 to the active site in subunit 1, a binuclear center (BNC) formed by heme A3 and copper B (CU(B)). The BNC reduces molecular oxygen to 2 water molecules using 4 electrons from cytochrome c in the IMS and 4 protons from the mitochondrial matrix. This Manduca sexta (Tobacco hawkmoth) protein is Cytochrome c oxidase subunit 5A, mitochondrial (COVA).